We begin with the raw amino-acid sequence, 271 residues long: Octanoyltransferase LipM (271 aa).

Positions 31 to 242 (GHNKPTLRFY…GLAEQFNVEF (212 aa)) constitute a BPL/LPL catalytic domain. The Acyl-thioester intermediate role is filled by Cys144.

The protein belongs to the octanoyltransferase LipM family. Monomer.

The enzyme catalyses octanoyl-[ACP] + L-lysyl-[protein] = N(6)-octanoyl-L-lysyl-[protein] + holo-[ACP] + H(+). Its pathway is protein modification; protein lipoylation via endogenous pathway; protein N(6)-(lipoyl)lysine from octanoyl-[acyl-carrier-protein]. Its function is as follows. Catalyzes the transfer of endogenously produced octanoic acid from octanoyl-acyl-carrier-protein onto the lipoyl domain of GcvH, an intermediate carrier during protein lipoylation. This Clostridioides difficile (strain 630) (Peptoclostridium difficile) protein is Octanoyltransferase LipM.